A 488-amino-acid polypeptide reads, in one-letter code: BRAP2 RING ZnF UBP domain-containing protein 1 (488 aa).

The RING-type; degenerate zinc-finger motif lies at 174–214; the sequence is CPICLERLDPDTSGIVSTLCDHSFQCSCTSKWTYLSCQVCR. The UBP-type; degenerate zinc-finger motif lies at 208 to 301; the sequence is LSCQVCRLCQ…GKSVEMSTSC (94 aa). Residues Cys-225, Cys-228, Cys-237, Cys-240, Cys-245, His-252, His-256, and His-262 each contribute to the Zn(2+) site. Residues 370-418 are a coiled coil; sequence EQIVVNTMQELQNKIEKCEEEKSGITEVNTKLIKEQDTWRKKAKEIEER. The tract at residues 453–488 is disordered; that stretch reads MSSDTDGIREGTVLPVPISPEPVSSVRRQKKSNRRK. Over residues 465–478 the composition is skewed to low complexity; that stretch reads VLPVPISPEPVSSV. A compositionally biased stretch (basic residues) spans 479 to 488; that stretch reads RRQKKSNRRK.

As to quaternary structure, component of the heteromeric E3 ligase complex made of BRIZ1 and BRIZ2. Forms heterooligomers with BRIZ2 via coiled-coil domains.

It catalyses the reaction S-ubiquitinyl-[E2 ubiquitin-conjugating enzyme]-L-cysteine + [acceptor protein]-L-lysine = [E2 ubiquitin-conjugating enzyme]-L-cysteine + N(6)-ubiquitinyl-[acceptor protein]-L-lysine.. It functions in the pathway protein modification; protein ubiquitination. Its function is as follows. RING-type ubiquitin E3 ligase required for seed germination and post-germination growth. In Arabidopsis thaliana (Mouse-ear cress), this protein is BRAP2 RING ZnF UBP domain-containing protein 1.